We begin with the raw amino-acid sequence, 1883 residues long: Endoribonuclease Dicer homolog 1 (1883 aa).

3 disordered regions span residues Ala71 to Pro97, Ala129 to Arg188, and Arg221 to Val262. Over residues Pro75–Leu96 the composition is skewed to pro residues. Basic and acidic residues-rich tracts occupy residues Ala129–His138 and Glu228–Val262. The 140-residue stretch at Val274–Asn413 folds into the Helicase ATP-binding domain. Leu287 to Thr294 is an ATP binding site. Positions Asp358–His361 match the DECH box motif. Residues Lys577–Ser604 form a disordered region. Residues Leu629–Thr789 enclose the Helicase C-terminal domain. The Dicer dsRNA-binding fold domain maps to Ala817–Glu912. The disordered stretch occupies residues Thr901–Arg928. The segment covering Gly907–Gln916 has biased composition (basic and acidic residues). Residues His1163–Pro1296 enclose the PAZ domain. 2 consecutive RNase III domains span residues Leu1320–Gly1498 and Phe1538–Gly1686. Mg(2+) contacts are provided by Glu1576, Asp1672, and Glu1675. 2 DRBM domains span residues His1712 to Glu1775 and Phe1797 to Arg1872.

Belongs to the helicase family. Dicer subfamily. As to quaternary structure, may interact with ARGONAUTE1 or PINHEAD through their common PAZ domains. It depends on Mg(2+) as a cofactor. Mn(2+) serves as cofactor.

The protein resides in the nucleus. Involved in the RNA silencing pathway. Cleaves double-stranded RNA to produce microRNAs (miRNAs) of 21-24 nucleotides which target the selective destruction of complementary RNAs. Regulates by this way the development of the plant. May not be involved in small interfering RNAs (siRNAs) production. This chain is Endoribonuclease Dicer homolog 1 (DCL1), found in Oryza sativa subsp. japonica (Rice).